We begin with the raw amino-acid sequence, 76 residues long: Exodeoxyribonuclease 7 small subunit (76 aa).

This sequence belongs to the XseB family. In terms of assembly, heterooligomer composed of large and small subunits.

Its subcellular location is the cytoplasm. The enzyme catalyses Exonucleolytic cleavage in either 5'- to 3'- or 3'- to 5'-direction to yield nucleoside 5'-phosphates.. Its function is as follows. Bidirectionally degrades single-stranded DNA into large acid-insoluble oligonucleotides, which are then degraded further into small acid-soluble oligonucleotides. This is Exodeoxyribonuclease 7 small subunit from Staphylococcus haemolyticus (strain JCSC1435).